Consider the following 509-residue polypeptide: Zinc finger CCCH-type with G patch domain-containing protein (509 aa).

Residues 41–61 form a disordered region; that stretch reads TRGSEPEATSDTKTPETSDNI. Polar residues predominate over residues 47–58; it reads EATSDTKTPETS. A C3H1-type zinc finger spans residues 155-178; that stretch reads PCNYFLEGECRFDEVRCRYSHGAL. The disordered stretch occupies residues 254–278; sequence DDDLTSESEESNETDGSDAGNDSDM. In terms of domain architecture, G-patch spans 310–356; the sequence is TRGIGSKLMANMGYIHGTGLGSDGRGIVTPVSAQILPQGRSLDACME. Residues 410 to 433 form a disordered region; the sequence is GSQQTENANKKTKPNNLQQHSNKT. Positions 423–433 are enriched in polar residues; sequence PNNLQQHSNKT.

It is found in the nucleus. Its function is as follows. Transcription repressor. This chain is Zinc finger CCCH-type with G patch domain-containing protein, found in Drosophila mojavensis (Fruit fly).